The primary structure comprises 432 residues: Adenylosuccinate synthetase (432 aa).

Residues 13 to 19 (GDEGKGK) and 41 to 43 (GHT) each bind GTP. The Proton acceptor role is filled by aspartate 14. Aspartate 14 and glycine 41 together coordinate Mg(2+). IMP-binding positions include 14-17 (DEGK), 39-42 (NAGH), threonine 130, arginine 144, glutamine 225, threonine 240, and arginine 304. The Proton donor role is filled by histidine 42. 300-306 (AVTGRPR) contacts substrate. Residues arginine 306, 332–334 (KLD), and 415–417 (STG) each bind GTP.

This sequence belongs to the adenylosuccinate synthetase family. In terms of assembly, homodimer. Mg(2+) is required as a cofactor.

The protein localises to the cytoplasm. It catalyses the reaction IMP + L-aspartate + GTP = N(6)-(1,2-dicarboxyethyl)-AMP + GDP + phosphate + 2 H(+). Its pathway is purine metabolism; AMP biosynthesis via de novo pathway; AMP from IMP: step 1/2. Plays an important role in the de novo pathway of purine nucleotide biosynthesis. Catalyzes the first committed step in the biosynthesis of AMP from IMP. The chain is Adenylosuccinate synthetase from Actinobacillus pleuropneumoniae serotype 5b (strain L20).